We begin with the raw amino-acid sequence, 475 residues long: Bifunctional protein HldE (475 aa).

Residues Met-1–His-321 are ribokinase. Residue Asn-197–Glu-200 participates in ATP binding. Residue Asp-266 is part of the active site. The cytidylyltransferase stretch occupies residues Met-346–Asn-475.

The protein in the N-terminal section; belongs to the carbohydrate kinase PfkB family. This sequence in the C-terminal section; belongs to the cytidylyltransferase family. As to quaternary structure, homodimer.

It catalyses the reaction D-glycero-beta-D-manno-heptose 7-phosphate + ATP = D-glycero-beta-D-manno-heptose 1,7-bisphosphate + ADP + H(+). The enzyme catalyses D-glycero-beta-D-manno-heptose 1-phosphate + ATP + H(+) = ADP-D-glycero-beta-D-manno-heptose + diphosphate. The protein operates within nucleotide-sugar biosynthesis; ADP-L-glycero-beta-D-manno-heptose biosynthesis; ADP-L-glycero-beta-D-manno-heptose from D-glycero-beta-D-manno-heptose 7-phosphate: step 1/4. Its pathway is nucleotide-sugar biosynthesis; ADP-L-glycero-beta-D-manno-heptose biosynthesis; ADP-L-glycero-beta-D-manno-heptose from D-glycero-beta-D-manno-heptose 7-phosphate: step 3/4. In terms of biological role, catalyzes the phosphorylation of D-glycero-D-manno-heptose 7-phosphate at the C-1 position to selectively form D-glycero-beta-D-manno-heptose-1,7-bisphosphate. Catalyzes the ADP transfer from ATP to D-glycero-beta-D-manno-heptose 1-phosphate, yielding ADP-D-glycero-beta-D-manno-heptose. This Coxiella burnetii (strain Dugway 5J108-111) protein is Bifunctional protein HldE.